The following is a 1131-amino-acid chain: Translation initiation factor IF-2 (1131 aa).

The interval 49 to 542 (KFKGSVSSNE…AFIMPKPQQS (494 aa)) is disordered. Residues 60-75 (KSIDNGKASRVEKPEK) are compositionally biased toward basic and acidic residues. 2 stretches are compositionally biased toward polar residues: residues 76–88 (NNSV…QTPS) and 108–125 (SEQN…NIQS). Basic and acidic residues predominate over residues 127–138 (GDRKYQHTDRRP). Residues 139–152 (QGNNGEGPQTSTNS) show a composition bias toward polar residues. Basic and acidic residues-rich tracts occupy residues 164-180 (GDRR…RPYN) and 223-239 (GDRR…RPYN). Residues 411-436 (GQGGYGGRPQGQGSYGGRPQGQGGYA) show a composition bias toward gly residues. Basic and acidic residues-rich tracts occupy residues 450-479 (KDFD…KSSI) and 487-530 (LTKE…DPNR). Residues 632-801 (KRPPVVCVMG…ILTAEMGELK (170 aa)) form the tr-type G domain. Residues 641–648 (GHVDHGKT) are G1. Residue 641-648 (GHVDHGKT) participates in GTP binding. Positions 666–670 (GITQH) are G2. Positions 687-690 (DTPG) are G3. GTP contacts are provided by residues 687–691 (DTPGH) and 741–744 (NKID). A G4 region spans residues 741 to 744 (NKID). Residues 777–779 (SAH) are G5.

The protein belongs to the TRAFAC class translation factor GTPase superfamily. Classic translation factor GTPase family. IF-2 subfamily.

It is found in the cytoplasm. Its function is as follows. One of the essential components for the initiation of protein synthesis. Protects formylmethionyl-tRNA from spontaneous hydrolysis and promotes its binding to the 30S ribosomal subunits. Also involved in the hydrolysis of GTP during the formation of the 70S ribosomal complex. The polypeptide is Translation initiation factor IF-2 (Lachnoclostridium phytofermentans (strain ATCC 700394 / DSM 18823 / ISDg) (Clostridium phytofermentans)).